A 125-amino-acid chain; its full sequence is Large ribosomal subunit protein bL12 (125 aa).

It belongs to the bacterial ribosomal protein bL12 family. In terms of assembly, homodimer. Part of the ribosomal stalk of the 50S ribosomal subunit. Forms a multimeric L10(L12)X complex, where L10 forms an elongated spine to which 2 to 4 L12 dimers bind in a sequential fashion. Binds GTP-bound translation factors.

Its function is as follows. Forms part of the ribosomal stalk which helps the ribosome interact with GTP-bound translation factors. Is thus essential for accurate translation. This Campylobacter jejuni subsp. jejuni serotype O:2 (strain ATCC 700819 / NCTC 11168) protein is Large ribosomal subunit protein bL12.